We begin with the raw amino-acid sequence, 298 residues long: MLVQVNYFLQLVLHAALFGLCSFAFVFALMATVTARYAFLLELEDSAHSIINLSHLAAFLLGPYVLATITWAMYKMLLCYKGLEMRSNFYMKTVVALAHLMAGSCWLLFVVFQPQIHKNGHVPVLDALIRHHDRQSLCWSGVVVQEYEVHDANAIRTDLNCVYYDNFMKKCVGCRMEVRHDEPTVFNQNQGALTMLALLAIVMHCWNMYVQQKETRRKPNRARNITNTLLMETEKEYDTAEEEEHESNMRSWILSARRARNRPHNYFPFCRQTGQTQNVSRLIFQHKRRARQVPPTAE.

This is an uncharacterized protein from Orgyia pseudotsugata multicapsid polyhedrosis virus (OpMNPV).